Reading from the N-terminus, the 109-residue chain is Cell division protein ZapA (109 aa).

Residues 21-99 (PEQRDALNQA…IEQALLEQGR (79 aa)) adopt a coiled-coil conformation.

Belongs to the ZapA family. Type 1 subfamily. Homodimer. Interacts with FtsZ.

The protein localises to the cytoplasm. In terms of biological role, activator of cell division through the inhibition of FtsZ GTPase activity, therefore promoting FtsZ assembly into bundles of protofilaments necessary for the formation of the division Z ring. It is recruited early at mid-cell but it is not essential for cell division. The sequence is that of Cell division protein ZapA from Klebsiella pneumoniae (strain 342).